Here is an 845-residue protein sequence, read N- to C-terminus: Putative DEAD-box ATP-dependent RNA helicase 33 (845 aa).

Disordered regions lie at residues 129-149 (GHPD…PMSP) and 282-302 (KFRK…NEGK). Over residues 289–298 (STEEDSDEEG) the composition is skewed to acidic residues. The short motif at 375 to 403 (KRFDESCISPLTLKALSASGIVKMTRVQD) is the Q motif element. The region spanning 406 to 590 (LSECLDGKDA…QLVLKRDHSY (185 aa)) is the Helicase ATP-binding domain. Position 419–426 (419–426 (AKTGTGKS)) interacts with ATP. Residues 538–541 (DEAD) carry the DEAD box motif. The Helicase C-terminal domain maps to 624-778 (LLKEHINNMP…QVDQSMAKID (155 aa)).

Belongs to the DEAD box helicase family.

It carries out the reaction ATP + H2O = ADP + phosphate + H(+). The chain is Putative DEAD-box ATP-dependent RNA helicase 33 (RH33) from Arabidopsis thaliana (Mouse-ear cress).